Here is a 165-residue protein sequence, read N- to C-terminus: V-type proton ATPase 16 kDa proteolipid subunit (165 aa).

The Lumenal portion of the chain corresponds to 1-10 (MSSTFSGDET). The chain crosses the membrane as a helical span at residues 11–33 (APFFGFLGAAAALVFSCMGAAYG). At 34 to 55 (TAKSGVGVASMGVMRPELVMKS) the chain is on the cytoplasmic side. Residues 56-76 (IVPVVMAGVLGIYGLIIAVII) form a helical membrane-spanning segment. Topologically, residues 77 to 95 (STGINPKAKSYYLFDGYAH) are lumenal. The helical transmembrane segment at 96–117 (LSSGLACGLAGLSAGMAIGIVG) threads the bilayer. Residues 118–129 (DAGVRANAQQPK) are Cytoplasmic-facing. A helical transmembrane segment spans residues 130–155 (LFVGMILILIFAEALALYGLIVGIIL). Over 156 to 165 (SSRAGQSRAE) the chain is Lumenal.

It belongs to the V-ATPase proteolipid subunit family. In terms of assembly, V-ATPase is a heteromultimeric enzyme composed of a peripheral catalytic V1 complex (main components: subunits A, B, C, D, E, and F) attached to an integral membrane V0 proton pore complex (main component: the proteolipid protein; which is present as a hexamer that forms the proton-conducting pore).

The protein resides in the vacuole membrane. Proton-conducting pore forming subunit of the membrane integral V0 complex of vacuolar ATPase. V-ATPase is responsible for acidifying a variety of intracellular compartments in eukaryotic cells. The chain is V-type proton ATPase 16 kDa proteolipid subunit (CVA16-2) from Gossypium hirsutum (Upland cotton).